The sequence spans 369 residues: Putative cyclin-F1-1 (369 aa).

The interval 328–350 is disordered; sequence AQHHLESKPAGAAGVGINSSGDD.

Belongs to the cyclin family. Cyclin F subfamily.

This chain is Putative cyclin-F1-1 (CYCF1-1), found in Oryza sativa subsp. japonica (Rice).